Here is a 396-residue protein sequence, read N- to C-terminus: Tyrosine--tRNA ligase (396 aa).

The short motif at 43 to 52 (PSSPDIHLGH) is the 'HIGH' region element. Residues 227 to 231 (KMSKS) carry the 'KMSKS' region motif. Lys-230 lines the ATP pocket. The region spanning 338 to 396 (TGVIDFIILSGLAKSKSEARRLLEQGAVEINSEKISDQNTPVKCGDIIKAGKRRYSKAI) is the S4 RNA-binding domain.

Belongs to the class-I aminoacyl-tRNA synthetase family. TyrS type 2 subfamily. Homodimer.

It localises to the cytoplasm. It carries out the reaction tRNA(Tyr) + L-tyrosine + ATP = L-tyrosyl-tRNA(Tyr) + AMP + diphosphate + H(+). Catalyzes the attachment of tyrosine to tRNA(Tyr) in a two-step reaction: tyrosine is first activated by ATP to form Tyr-AMP and then transferred to the acceptor end of tRNA(Tyr). In Dehalococcoides mccartyi (strain CBDB1), this protein is Tyrosine--tRNA ligase.